The chain runs to 147 residues: Globin, polymeric component P3 (147 aa).

Positions 2–146 (HLTADQVAAL…ISDALIAGLE (145 aa)) constitute a Globin domain. Residue His96 participates in heme b binding.

Belongs to the globin family. In terms of assembly, polymer.

This Glycera dibranchiata (Bloodworm) protein is Globin, polymeric component P3.